A 66-amino-acid chain; its full sequence is Surface composition regulator (66 aa).

Belongs to the GlgS family.

In terms of biological role, major determinant of cell surface composition. Negatively regulates motility, adhesion and synthesis of biofilm exopolysaccharides. This Shigella flexneri protein is Surface composition regulator.